The following is a 683-amino-acid chain: MADQTSQNDNQNGSGLPGGGPSGTGRGRLIIWVIAGTLLALWAYSYWGMGASGGERISYSEFRTQLQQENVERVEVKGNAINGSLKSQATRSEQGNTIEYQNFVTYLPSFGDEQLMDLLESQGVNVVTKPESSFPWGLVIMGLLPVLLLFGVGYIFLRRMQSQGQGLFSVRQSKAELYDKDEEDTTFDDVAGADSAKEELREIIKFLKNPKRFEGLGGKVPKGVLLVGPPGTGKTLLARAVAGEANAPFFSVSGSDFMEMFVGVGASRVRDMFSEAKETSPAIIFIDELDSIGRKRGAGLGGGNDEREQTLNQLLSELDGFEENEGVIVMAATNRPDILDSALTRPGRFDRQITVDLPTKQSRHEILKIHAREKPLSDDVDLEEIARSTPGFSGADLENLLNEAALLAGRHGHDAIQYSDIEQARDKVMMGLKRDGMVLDDEEKKLLAYHEAGHAIVGAVLPNADPVHKVTIVPRGKAMGVTQQLPEKDQYLYRHDYILDRLAVIMGGRAAEELIFDTATSGAENDLKQVRKMARKMVLDWGMGDQFKHISLGEDQGNVFLGDEIAKGREYSDDTAREVDEEIRRISEDAFQRAVDTLNEHHEAFDQLADMLIEQEEVSGKDVLNLVNGDTDEIGHMPTTNGAAASEENGSADDHEPDEATVIEEDGESGEGRASGSADASGS.

Residues 1–12 (MADQTSQNDNQN) are compositionally biased toward polar residues. A disordered region spans residues 1–21 (MADQTSQNDNQNGSGLPGGGP). Over 1 to 28 (MADQTSQNDNQNGSGLPGGGPSGTGRGR) the chain is Cytoplasmic. Residues 29-49 (LIIWVIAGTLLALWAYSYWGM) form a helical membrane-spanning segment. The Periplasmic segment spans residues 50-136 (GASGGERISY…VTKPESSFPW (87 aa)). The chain crosses the membrane as a helical span at residues 137–157 (GLVIMGLLPVLLLFGVGYIFL). Topologically, residues 158–683 (RRMQSQGQGL…ASGSADASGS (526 aa)) are cytoplasmic. 228 to 235 (GPPGTGKT) contributes to the ATP binding site. His-450 contributes to the Zn(2+) binding site. Glu-451 is a catalytic residue. Zn(2+)-binding residues include His-454 and Asp-526. Residues 627–683 (VNGDTDEIGHMPTTNGAAASEENGSADDHEPDEATVIEEDGESGEGRASGSADASGS) form a disordered region. A compositionally biased stretch (acidic residues) spans 655 to 669 (HEPDEATVIEEDGES). Positions 672–683 (GRASGSADASGS) are enriched in low complexity.

It in the central section; belongs to the AAA ATPase family. The protein in the C-terminal section; belongs to the peptidase M41 family. Homohexamer. Zn(2+) is required as a cofactor.

Its subcellular location is the cell inner membrane. Acts as a processive, ATP-dependent zinc metallopeptidase for both cytoplasmic and membrane proteins. Plays a role in the quality control of integral membrane proteins. The protein is ATP-dependent zinc metalloprotease FtsH 2 of Salinibacter ruber (strain M8).